Here is an 835-residue protein sequence, read N- to C-terminus: MFIAQNWVTGLLGHSNPGWSVTSEELDAGYVRVGFETEGYAAIPATTGPLVLGVVESIEELTEFKKPIRHCFVNVGQANGTGENQSIICGARNFAEGDTVVVALPGAVLPGDFAIGARETYGRMSAGMICSAAELGLADKQNSGIITLPAESGQPGDDARAVLGLDDTVFEVNVTPDRGYALSARGLTRELASAFNLTYTDVAEDTRVAGIELTAPEPAGELIDIDVREETNTVRFGLRKVSGIDPNAESPFWLQRELMLCRQRPVNAATDVTNYVMMLLGAPMHAFDATKITGGLTVRNAQPGEKFETLDHVIRDLSGEDVVICDETGIQSMAGVMGGVTSEISNETTEVYFESAIWDPKTVARTSRRHKLSSEASRRFERGVDPAIVEVALDMACSLLVEIAGGTIDAGRTLIGEVPTMPSITMPVSRPSELAGVEYSPETVVARLEEVGCTVSVNGDVLTVVPPTWRSDLTMAADLVEEVLRLEGLEAIPTIVPTAPAGRGLSDAQKRRRAIGHALAYAGYAEIIPSPFMNPETFDVWGLDADDERRNTVTVLNPLEADSNVLSTTLLPSMLDAVRRNVTRGTGDFSLFGVQQVSFERGNGVSPMPSVKQRPSAEVVAELLDTLPEQPLHAATVGTGNIEFEGPWGSGRAYTYADAIESARIVARAAGIELELANADELPWHPGRCAALLVDGHVVGHAGELHPQVLERAGLPARTCAMEINIDALPLRENLPAPVLSAFPALHQDIALVVDETVPAEQVRAVVEEGAGELVETVELFDVYRSEQLGEGKKSLAFSLLFRAPDRTLTDEEANVARLAAAELAKERLGAEMRG.

A tRNA-binding domain is found at 44–160; sequence PATTGPLVLG…ESGQPGDDAR (117 aa). The 76-residue stretch at 419-494 folds into the B5 domain; it reads PTMPSITMPV…RLEGLEAIPT (76 aa). Asp-472, Asp-478, Glu-481, and Glu-482 together coordinate Mg(2+). Residues 741–834 form the FDX-ACB domain; sequence SAFPALHQDI…AKERLGAEMR (94 aa).

The protein belongs to the phenylalanyl-tRNA synthetase beta subunit family. Type 1 subfamily. Tetramer of two alpha and two beta subunits. Mg(2+) serves as cofactor.

The protein resides in the cytoplasm. The catalysed reaction is tRNA(Phe) + L-phenylalanine + ATP = L-phenylalanyl-tRNA(Phe) + AMP + diphosphate + H(+). The chain is Phenylalanine--tRNA ligase beta subunit from Corynebacterium efficiens (strain DSM 44549 / YS-314 / AJ 12310 / JCM 11189 / NBRC 100395).